Consider the following 838-residue polypeptide: MSLQVLNDKNVSNEKNTENCDFLFSPPEVTGRSSVLRVSQKENVPPKNLAKAMKVTFQTPLRDPQTHRILSPSMASKLEAPFTQDDTLGLENSHPVWTQKENQQLIKEVDAKTTHGILQKPVEADTDLLGDASPAFGSGSSSESGPGALADLDCSSSSQSPGSSENQMVSPGKVSGSPEQAVEENLSSYSLDRRVTPASETLEDPCRTESQHKAETPHGAEEECKAETPHGAEEECRHGGVCAPAAVATSPPGAIPKEACGGAPLQGLPGEALGCPAGVGTPVPADGTQTLTCAHTSAPESTAPTNHLVAGRAMTLSPQEEVAAGQMASSSRSGPVKLEFDVSDGATSKRAPPPRRLGERSGLKPPLRKAAVRQQKAPQEVEEDDGRSGAGEDPPMPASRGSYHLDWDKMDDPNFIPFGGDTKSGCSEAQPPESPETRLGQPAAEQLHAGPATEEPGPCLSQQLHSASAEDTPVVQLAAETPTAESKERALNSASTSLPTSCPGSEPVPTHQQGQPALELKEESFRDPAEVLGTGAEVDYLEQFGTSSFKESALRKQSLYLKFDPLLRDSPGRPVPVATETSSMHGANETPSGRPREAKLVEFDFLGALDIPVPGPPPGVPAPGGPPLSTGPIVDLLQYSQKDLDAVVKATQEENRELRSRCEELHGKNLELGKIMDRFEEVVYQAMEEVQKQKELSKAEIQKVLKEKDQLTTDLNSMEKSFSDLFKRFEKQKEVIEGYRKNEESLKKCVEDYLARITQEGQRYQALKAHAEEKLQLANEEIAQVRSKAQAEALALQASLRKEQMRIQSLEKTVEQKTKENEELTRICDDLISKMEKI.

N-acetylserine is present on S2. Phosphoserine is present on residues S25, S39, and S71. A disordered region spans residues 123–227 (EADTDLLGDA…HGAEEECKAE (105 aa)). Over residues 132–164 (ASPAFGSGSSSESGPGALADLDCSSSSQSPGSS) the composition is skewed to low complexity. Phosphoserine is present on residues S175 and S177. Residues 204 to 227 (DPCRTESQHKAETPHGAEEECKAE) show a composition bias toward basic and acidic residues. S250, S317, and S402 each carry phosphoserine. The segment at 311-527 (GRAMTLSPQE…LELKEESFRD (217 aa)) is disordered. Residues 403-412 (YHLDWDKMDD) are compositionally biased toward basic and acidic residues. S434 is modified (phosphoserine). Residues 492 to 503 (NSASTSLPTSCP) are compositionally biased toward polar residues. The interval 522 to 577 (EESFRDPAEVLGTGAEVDYLEQFGTSSFKESALRKQSLYLKFDPLLRDSPGRPVPV) is necessary but not sufficient for spindle localization. Residue S558 is modified to Phosphoserine; by AURKA. Residues 569-594 (DSPGRPVPVATETSSMHGANETPSGR) form a disordered region. A compositionally biased stretch (polar residues) spans 579–591 (TETSSMHGANETP). The tract at residues 594-838 (RPREAKLVEF…DDLISKMEKI (245 aa)) is necessary but not sufficient for spindle localization. The stretch at 637-837 (LQYSQKDLDA…CDDLISKMEK (201 aa)) forms a coiled coil.

Belongs to the TACC family. Interacts with microtubules. Interacts with CKAP5 independently of clathrin. Interacts with CKAP5 and clathrin forming the TACC3/ch-TOG/clathrin complex located at spindle inter-microtubules bridges; TACC3 (phosphorylated at Ser-558 by AURKA) and CLTC are proposed to form a composite microtubule interaction surface. Interacts with CCDC100/CEP120. The coiled coil C-terminal region interacts with AH receptor nuclear translocator protein (ARNT) and ARNT2. Interacts with GCN5L2 and PCAF.

It is found in the cytoplasm. The protein localises to the cytoskeleton. The protein resides in the microtubule organizing center. Its subcellular location is the centrosome. It localises to the spindle. It is found in the spindle pole. Plays a role in the microtubule-dependent coupling of the nucleus and the centrosome. Involved in the processes that regulate centrosome-mediated interkinetic nuclear migration (INM) of neural progenitors. Acts as a component of the TACC3/ch-TOG/clathrin complex proposed to contribute to stabilization of kinetochore fibers of the mitotic spindle by acting as inter-microtubule bridge. The TACC3/ch-TOG/clathrin complex is required for the maintenance of kinetochore fiber tension. May be involved in the control of cell growth and differentiation. May contribute to cancer. This chain is Transforming acidic coiled-coil-containing protein 3 (TACC3), found in Homo sapiens (Human).